The following is a 252-amino-acid chain: Putative zinc finger CCCH domain-containing protein 58 (252 aa).

The segment at 35 to 62 (NHKSVLCMKWREGRCHNGVACRYAHGEE) adopts a C3H1-type zinc-finger fold. Disordered stretches follow at residues 71–95 (RVGG…SGST), 109–180 (RHGR…SAAD), and 215–252 (TATS…APPK). Composition is skewed to low complexity over residues 133–149 (SARS…TTPP) and 229–238 (ITTTTSSSTT).

This chain is Putative zinc finger CCCH domain-containing protein 58, found in Oryza sativa subsp. japonica (Rice).